An 877-amino-acid polypeptide reads, in one-letter code: GPI ethanolamine phosphate transferase 2 (877 aa).

N190 and N368 each carry an N-linked (GlcNAc...) asparagine glycan. The next 5 membrane-spanning stretches (helical) occupy residues 409–429 (VDIY…FGLF), 443–463 (YNWY…ASSL), 464–484 (IEEE…ALYF), 528–548 (VDLL…LIYS), and 570–590 (DFGS…SFSF). N611 carries N-linked (GlcNAc...) asparagine glycosylation. Transmembrane regions (helical) follow at residues 634-654 (IHLS…RIVL), 683-703 (EIVP…KLLA), 716-736 (LMII…FSMG), 758-778 (VFLV…FWSL), 817-837 (LAGF…CFNL), and 854-876 (FASW…ILAL).

The protein belongs to the PIGG/PIGN/PIGO family. PIGG subfamily.

Its subcellular location is the endoplasmic reticulum membrane. The protein operates within glycolipid biosynthesis; glycosylphosphatidylinositol-anchor biosynthesis. Its function is as follows. Ethanolamine phosphate transferase involved in glycosylphosphatidylinositol-anchor biosynthesis. Transfers ethanolamine phosphate to the GPI second mannose. This Debaryomyces hansenii (strain ATCC 36239 / CBS 767 / BCRC 21394 / JCM 1990 / NBRC 0083 / IGC 2968) (Yeast) protein is GPI ethanolamine phosphate transferase 2 (LAS21).